A 761-amino-acid chain; its full sequence is Hyperosmolality-gated Ca2+ permeable channel 1.6 (761 aa).

The next 10 membrane-spanning stretches (helical) occupy residues 7–27 (IGVA…AFAI), 101–121 (IYLL…TTMV), 156–176 (PRFW…CFIL), 375–395 (LIVG…IAFV), 419–439 (LLKS…FLLF), 467–487 (FYMF…TAFQ), 512–532 (ATFF…GEIL), 583–603 (AAVS…AFVV), 630–650 (VVTA…TKHA), and 653–673 (STPL…HCKN). Basic and acidic residues predominate over residues 718-731 (RVGEDPEPEEKLES). Residues 718–761 (RVGEDPEPEEKLESDMSPPDLVATKRWSWRNTPLPSKDSCREIP) form a disordered region.

It belongs to the CSC1 (TC 1.A.17) family.

The protein localises to the membrane. In terms of biological role, acts as an osmosensitive calcium-permeable cation channel. This Arabidopsis thaliana (Mouse-ear cress) protein is Hyperosmolality-gated Ca2+ permeable channel 1.6.